A 111-amino-acid chain; its full sequence is Large ribosomal subunit protein uL22 (111 aa).

This sequence belongs to the universal ribosomal protein uL22 family. As to quaternary structure, part of the 50S ribosomal subunit.

In terms of biological role, this protein binds specifically to 23S rRNA; its binding is stimulated by other ribosomal proteins, e.g. L4, L17, and L20. It is important during the early stages of 50S assembly. It makes multiple contacts with different domains of the 23S rRNA in the assembled 50S subunit and ribosome. Functionally, the globular domain of the protein is located near the polypeptide exit tunnel on the outside of the subunit, while an extended beta-hairpin is found that lines the wall of the exit tunnel in the center of the 70S ribosome. The protein is Large ribosomal subunit protein uL22 of Francisella tularensis subsp. tularensis (strain FSC 198).